Reading from the N-terminus, the 871-residue chain is Serrate RNA effector molecule homolog (871 aa).

Residues 1–90 are disordered; it reads MGDSDDEYDR…RRDWDGHSSD (90 aa). Glycine 2 carries the N-acetylglycine modification. Residue serine 4 is modified to Phosphoserine. Tyrosine 8 is subject to Phosphotyrosine. A compositionally biased stretch (basic and acidic residues) spans 8–73; that stretch reads YDRRRRDKFR…ERFSPPRHEL (66 aa). A phosphoserine mark is found at serine 67, serine 74, and serine 136. Lysine 150 participates in a covalent cross-link: Glycyl lysine isopeptide (Lys-Gly) (interchain with G-Cter in SUMO2). The tract at residues 272–411 is disordered; sequence EEEEQAGKPG…KPKDAAGLEC (140 aa). A compositionally biased stretch (basic and acidic residues) spans 297–347; sequence DGERKTNDKDEKKEDSKQAENDSSNDDKTKKSEGDGDKEEKKEDSEKEAKK. Residues 370 to 385 show a composition bias toward acidic residues; it reads SESESESGQAEEEKEE. The segment covering 386–411 has biased composition (basic and acidic residues); that stretch reads AEALKEKEKPKEEEWEKPKDAAGLEC. Phosphoserine is present on residues serine 492 and serine 539. Threonine 543 bears the Phosphothreonine mark. At serine 569 the chain carries Phosphoserine. A disordered region spans residues 574–597; sequence ELLGSSGGAPPEEPPKEGNPAEIN. Phosphothreonine is present on threonine 670. Residue serine 678 is modified to Phosphoserine. Omega-N-methylarginine occurs at positions 828, 835, and 845. A disordered region spans residues 830–849; sequence NYDAFRGQGGYPGKPRNRMV.

It belongs to the ARS2 family. In terms of assembly, interacts with CASP8AP2, ERBB4, NCBP1/CBP80 and DROSHA. Interacts with LUZP4. Interacts with NCBP2/CBP20 and NCBP3. Interacts with MTREX.

The protein localises to the nucleus. It is found in the nucleoplasm. Its subcellular location is the cytoplasm. In terms of biological role, acts as a mediator between the cap-binding complex (CBC) and the primary microRNAs (miRNAs) processing machinery during cell proliferation. Contributes to the stability and delivery of capped primary miRNA transcripts to the primary miRNA processing complex containing DGCR8 and DROSHA, thereby playing a role in RNA-mediated gene silencing (RNAi) by miRNAs. Binds capped RNAs (m7GpppG-capped RNA); however interaction is probably mediated via its interaction with NCBP1/CBP80 component of the CBC complex. Involved in cell cycle progression at S phase. Does not directly confer arsenite resistance but rather modulates arsenic sensitivity. Independently of its activity on miRNAs, necessary and sufficient to promote neural stem cell self-renewal. Does so by directly binding SOX2 promoter and positively regulating its transcription. In Pongo abelii (Sumatran orangutan), this protein is Serrate RNA effector molecule homolog (SRRT).